The following is a 389-amino-acid chain: MPRNDQFNNSHPLDDYIEQQQLNNLDNNSNVSLANQNTVLDDFQQQFSDKEMQKIESISQQIKPLDNDGLLSYGSHLQENMSKFSHKMLDEVQTKDIGPVGDSLNQLMTKLKAVNPDELNPEKQSKLKRFFKRTKASINEVFSRMQSVSSQIDRITIQLDRHKNNLSKDIKLLDGLYQQNKDYFDDVNLYIAAAKRRKHEIQTNDIPKLQEHANQTGNQMDIQAVADMEQFVDRLDKRIYDLQLSRQIAIQTAPQIRMIQNVNQALAEKIQSSILTSIPLWKNQMAIALTLMRQRNAVSAQRAVTDTTNDLLTQNAAMLKQNAIETATENERGIVDIETLKTTQSDIIETIEQTLQIQQNGRQKRKEAEKELVGLEDELKQHLLSMKKE.

Belongs to the TelA family.

In Staphylococcus haemolyticus (strain JCSC1435), this protein is TelA-like protein SH1505.